The sequence spans 1189 residues: Zinc finger CCCH domain-containing protein 6 (1189 aa).

The segment covering M1–E12 has biased composition (basic and acidic residues). Residues M1 to D105 form a disordered region. Acidic residues predominate over residues D13 to E28. Positions E27–N73 form a coiled coil. Residues I29 to Y46 are compositionally biased toward basic and acidic residues. The span at R47–N73 shows a compositional bias: basic residues. 3 consecutive C3H1-type zinc fingers follow at residues K273–E299, E301–F328, and P329–L352. Residues T353–G385 adopt a coiled-coil conformation. 5 disordered regions span residues F451–N530, P630–G659, Y676–V755, L947–P1026, and P1051–C1189. Low complexity predominate over residues Q461–S478. Positions A505–I525 are enriched in pro residues. A compositionally biased stretch (low complexity) spans H639–G659. Positions K718 to T741 are enriched in polar residues. Residues G961–L973 are compositionally biased toward basic and acidic residues. Composition is skewed to low complexity over residues S1009–A1020 and S1056–E1069. S1158 carries the post-translational modification Phosphoserine. The span at D1164 to K1179 shows a compositional bias: basic and acidic residues.

This chain is Zinc finger CCCH domain-containing protein 6 (ZC3H6), found in Homo sapiens (Human).